The chain runs to 1441 residues: Receptor-type tyrosine-protein phosphatase T (1441 aa).

An N-terminal signal peptide occupies residues 1–25; the sequence is MASLAALALSLLLRLQLPPLPGARA. Topologically, residues 26 to 747 are extracellular; sequence QSAAGGCSFD…EKQVDNTVKM (722 aa). An MAM domain is found at 30-191; that stretch reads GGCSFDEHYS…VRVLAHPCRK (162 aa). Residues Asn78, Asn98, Asn137, and Asn208 are each glycosylated (N-linked (GlcNAc...) asparagine). An Ig-like C2-type domain is found at 193–284; the sequence is PHFLRLQNVE…SGVSNYAELI (92 aa). A disulfide bond links Cys213 and Cys267. 4 Fibronectin type-III domains span residues 291 to 384, 389 to 483, 484 to 590, and 591 to 726; these read PIAP…TKCA, GPQN…TEED, VPGA…SAPS, and MPEY…ATKG. N-linked (GlcNAc...) asparagine glycosylation is found at Asn421, Asn510, Asn547, Asn601, Asn654, and Asn684. The chain crosses the membrane as a helical span at residues 748–768; the sequence is AGVIAGLLMFIIILLGVMLTI. The Cytoplasmic portion of the chain corresponds to 769-1441; sequence KRRRNAYSYS…EVALEYLSSF (673 aa). Positions 790 to 839 are disordered; that stretch reads TQSGAQREMGPVASADKPTTKLSASRNDEGFSSSSQDVNGFTDGSRGELS. Polar residues predominate over residues 809–828; that stretch reads TKLSASRNDEGFSSSSQDVN. Tyrosine-protein phosphatase domains follow at residues 889–1143 and 1175–1437; these read FKEE…ILEA and IKDE…ALEY. Substrate-binding positions include Asp1052, 1084–1090, and Gln1128; that span reads CSAGAGR. Cys1084 (phosphocysteine intermediate) is an active-site residue. Ser1208 is subject to Phosphoserine. The active-site Phosphocysteine intermediate is the Cys1378.

It belongs to the protein-tyrosine phosphatase family. Receptor class 2B subfamily. In terms of tissue distribution, expressed in colon, lung, heart and testis, as well as in fetal and adult brain. Not detected in muscle and peripheral blood leukocytes.

It is found in the membrane. The enzyme catalyses O-phospho-L-tyrosyl-[protein] + H2O = L-tyrosyl-[protein] + phosphate. Functionally, may be involved in both signal transduction and cellular adhesion in the CNS. This chain is Receptor-type tyrosine-protein phosphatase T (PTPRT), found in Homo sapiens (Human).